We begin with the raw amino-acid sequence, 146 residues long: Basic phospholipase A2 paradoxin-like alpha chain (146 aa).

Positions 1 to 27 (MHPAHLLVLLAVCVSLLGASDIPPLPL) are cleaved as a signal peptide. 7 disulfide bridges follow: C38–C99, C54–C145, C56–C72, C71–C126, C78–C119, C88–C112, and C106–C117. Y55, G57, and G59 together coordinate Ca(2+). H75 is an active-site residue. D76 is a Ca(2+) binding site. Residue D120 is part of the active site.

This sequence belongs to the phospholipase A2 family. Group I subfamily. D49 sub-subfamily. As to quaternary structure, heterotrimer of alpha, beta, and gamma chains; non-covalently linked. Ca(2+) serves as cofactor. Expressed by the venom gland.

It localises to the secreted. The catalysed reaction is a 1,2-diacyl-sn-glycero-3-phosphocholine + H2O = a 1-acyl-sn-glycero-3-phosphocholine + a fatty acid + H(+). In terms of biological role, heterotrimer: Snake venom phospholipase A2 (PLA2) heterotrimer that acts as a potent presynaptic neurotoxin by blocking synaptic transmission and synaptic vesicle recycling. May act by binding in a calcium-dependent fashion to neurotonal pentraxin-1 (NPTX1) and neurotonal pentraxin-2 (NPTX2), but not to neuronal pentraxin receptor (NPTXR). Also binds to taipoxin-associated calcium binding protein 49 (RCN2), a protein localized in the lumen of endoplasmic reticulum. Functionally, monomer (alpha chain): Snake venom phospholipase A2 (PLA2) alpha chain that possesses the same high enzymatic activity than the heterotrimer. PLA2 catalyzes the calcium-dependent hydrolysis of the 2-acyl groups in 3-sn-phosphoglycerides. The chain is Basic phospholipase A2 paradoxin-like alpha chain from Oxyuranus microlepidotus (Inland taipan).